The sequence spans 707 residues: Polyribonucleotide nucleotidyltransferase (707 aa).

D488 and D494 together coordinate Mg(2+). Positions 555–615 (PIIKVTKIDP…ENVDNAIALI (61 aa)) constitute a KH domain. Residues 625-692 (GEILEGKITR…DLGRLQFKRV (68 aa)) enclose the S1 motif domain.

The protein belongs to the polyribonucleotide nucleotidyltransferase family. Mg(2+) serves as cofactor.

It is found in the cytoplasm. It carries out the reaction RNA(n+1) + phosphate = RNA(n) + a ribonucleoside 5'-diphosphate. Functionally, involved in mRNA degradation. Catalyzes the phosphorolysis of single-stranded polyribonucleotides processively in the 3'- to 5'-direction. This Thermotoga neapolitana (strain ATCC 49049 / DSM 4359 / NBRC 107923 / NS-E) protein is Polyribonucleotide nucleotidyltransferase.